The chain runs to 248 residues: 3-oxoacyl-[acyl-carrier-protein] reductase FabG (248 aa).

Residues 14–17 (GGSR), 65–66 (DV), and N92 contribute to the NADP(+) site. S144 provides a ligand contact to substrate. Y157 serves as the catalytic Proton acceptor. Residues 157–161 (YAAAK) and I190 each bind NADP(+).

The protein belongs to the short-chain dehydrogenases/reductases (SDR) family. Homotetramer.

The catalysed reaction is a (3R)-hydroxyacyl-[ACP] + NADP(+) = a 3-oxoacyl-[ACP] + NADPH + H(+). Its pathway is lipid metabolism; fatty acid biosynthesis. In terms of biological role, catalyzes the NADPH-dependent reduction of beta-ketoacyl-ACP substrates to beta-hydroxyacyl-ACP products, the first reductive step in the elongation cycle of fatty acid biosynthesis. The protein is 3-oxoacyl-[acyl-carrier-protein] reductase FabG (fabG) of Chlamydia muridarum (strain MoPn / Nigg).